A 316-amino-acid chain; its full sequence is Methionyl-tRNA formyltransferase (316 aa).

112–115 (SLLP) provides a ligand contact to (6S)-5,6,7,8-tetrahydrofolate.

The protein belongs to the Fmt family.

It catalyses the reaction L-methionyl-tRNA(fMet) + (6R)-10-formyltetrahydrofolate = N-formyl-L-methionyl-tRNA(fMet) + (6S)-5,6,7,8-tetrahydrofolate + H(+). In terms of biological role, attaches a formyl group to the free amino group of methionyl-tRNA(fMet). The formyl group appears to play a dual role in the initiator identity of N-formylmethionyl-tRNA by promoting its recognition by IF2 and preventing the misappropriation of this tRNA by the elongation apparatus. The protein is Methionyl-tRNA formyltransferase of Haemophilus ducreyi (strain 35000HP / ATCC 700724).